Reading from the N-terminus, the 348-residue chain is Phenylalanine--tRNA ligase alpha subunit (348 aa).

E259 contacts Mg(2+).

It belongs to the class-II aminoacyl-tRNA synthetase family. Phe-tRNA synthetase alpha subunit type 1 subfamily. Tetramer of two alpha and two beta subunits. The cofactor is Mg(2+).

Its subcellular location is the cytoplasm. It carries out the reaction tRNA(Phe) + L-phenylalanine + ATP = L-phenylalanyl-tRNA(Phe) + AMP + diphosphate + H(+). This is Phenylalanine--tRNA ligase alpha subunit from Limosilactobacillus reuteri (strain DSM 20016) (Lactobacillus reuteri).